Consider the following 443-residue polypeptide: Glutamate--tRNA ligase 1 (443 aa).

The short motif at 9–19 (PSPTGYLHVGN) is the 'HIGH' region element. The 'KMSKS' region motif lies at 238–242 (KISKR). Position 241 (Lys-241) interacts with ATP.

It belongs to the class-I aminoacyl-tRNA synthetase family. Glutamate--tRNA ligase type 1 subfamily. In terms of assembly, monomer.

The protein localises to the cytoplasm. It catalyses the reaction tRNA(Glu) + L-glutamate + ATP = L-glutamyl-tRNA(Glu) + AMP + diphosphate. Functionally, catalyzes the attachment of glutamate to tRNA(Glu) in a two-step reaction: glutamate is first activated by ATP to form Glu-AMP and then transferred to the acceptor end of tRNA(Glu). The chain is Glutamate--tRNA ligase 1 from Ehrlichia ruminantium (strain Welgevonden).